Consider the following 268-residue polypeptide: TodF product hydratase (268 aa).

Belongs to the hydratase/decarboxylase family.

The protein operates within xenobiotic degradation; toluene degradation. Its function is as follows. Converts the product of 2-hydroxy-6-oxo-2,4-heptadienoate hydrolase. The sequence is that of TodF product hydratase (todJ) from Pseudomonas putida (strain ATCC 700007 / DSM 6899 / JCM 31910 / BCRC 17059 / LMG 24140 / F1).